Here is a 460-residue protein sequence, read N- to C-terminus: NADH-ubiquinone oxidoreductase chain 4 (460 aa).

Transmembrane regions (helical) follow at residues 20-42, 61-81, 94-113, 117-139, 148-168, 195-215, 225-245, 258-278, 285-304, 308-330, 351-371, 394-414, and 436-456; these read AKWL…LSWL, PLST…ILAS, RAYI…AFGA, IMFY…RWGN, TYFL…LLLM, LWWA…GVHL, PIAG…YGMM, LAYP…SICL, SLIA…GILI, WGFT…LFCL, MILP…LALP, LILT…LFLM, and LLII…ELMW.

It belongs to the complex I subunit 4 family.

It localises to the mitochondrion membrane. It carries out the reaction a ubiquinone + NADH + 5 H(+)(in) = a ubiquinol + NAD(+) + 4 H(+)(out). Core subunit of the mitochondrial membrane respiratory chain NADH dehydrogenase (Complex I) that is believed to belong to the minimal assembly required for catalysis. Complex I functions in the transfer of electrons from NADH to the respiratory chain. The immediate electron acceptor for the enzyme is believed to be ubiquinone. This Oncorhynchus mykiss (Rainbow trout) protein is NADH-ubiquinone oxidoreductase chain 4 (MT-ND4).